The following is a 172-amino-acid chain: Small ribosomal subunit protein uS5 (172 aa).

Residues Leu-17–Val-80 enclose the S5 DRBM domain.

This sequence belongs to the universal ribosomal protein uS5 family. As to quaternary structure, part of the 30S ribosomal subunit. Contacts proteins S4 and S8.

With S4 and S12 plays an important role in translational accuracy. In terms of biological role, located at the back of the 30S subunit body where it stabilizes the conformation of the head with respect to the body. This chain is Small ribosomal subunit protein uS5, found in Polaromonas naphthalenivorans (strain CJ2).